A 319-amino-acid chain; its full sequence is Shiga-like toxin 2 subunit A (319 aa).

The first 22 residues, 1 to 22, serve as a signal peptide directing secretion; sequence MKCILFKWVLCLLLGFSSVSYS. Positions 23 to 272 are A1; the sequence is REFTIDFSTQ…CHHQGARSVR (250 aa). Glu189 is a catalytic residue. Cys263 and Cys282 form a disulfide bridge. Residues 273–314 are A2; that stretch reads AVNEESQPECQITGDRPVIKINNTLWESNTAAAFLNRKSQFL.

It belongs to the ribosome-inactivating protein family. In terms of assembly, shiga-like toxin contains a single A subunit and multiple copies of a B subunit.

It is found in the secreted. The enzyme catalyses Endohydrolysis of the N-glycosidic bond at one specific adenosine on the 28S rRNA.. Functionally, the A subunit is responsible for inhibiting protein synthesis through the catalytic inactivation of 60S ribosomal subunits. After endocytosis, the A subunit is cleaved by furin in two fragments, A1 and A2: A1 is the catalytically active fragment, and A2 is essential for holotoxin assembly with the B subunits. In Escherichia coli O157:H7 (Bacteriophage 933W), this protein is Shiga-like toxin 2 subunit A (stxA2).